The chain runs to 104 residues: Astakine (104 aa).

An N-terminal signal peptide occupies residues 1–22 (MKMRGVSVGVLVVAMMSGLAMA). Cystine bridges form between Cys-25–Cys-38, Cys-32–Cys-50, Cys-37–Cys-76, Cys-60–Cys-84, and Cys-78–Cys-91.

Belongs to the AVIT (prokineticin) family.

It is found in the secreted. Functionally, cytokine directly involved in hematopoiesis. In Pacifastacus leniusculus (Signal crayfish), this protein is Astakine.